A 475-amino-acid chain; its full sequence is Cobyric acid synthase (475 aa).

The region spanning lysine 244–valine 431 is the GATase cobBQ-type domain. The active-site Nucleophile is cysteine 325. Histidine 423 is an active-site residue.

The protein belongs to the CobB/CobQ family. CobQ subfamily.

The protein operates within cofactor biosynthesis; adenosylcobalamin biosynthesis. In terms of biological role, catalyzes amidations at positions B, D, E, and G on adenosylcobyrinic A,C-diamide. NH(2) groups are provided by glutamine, and one molecule of ATP is hydrogenolyzed for each amidation. The polypeptide is Cobyric acid synthase (Vibrio campbellii (strain ATCC BAA-1116)).